Consider the following 1018-residue polypeptide: Inner centromere protein pic1 (1018 aa).

Ser-171 carries the post-translational modification Phosphoserine. Disordered stretches follow at residues 184–207 (VPLR…PKQK), 247–287 (RTKD…SSSP), 306–365 (AKES…PPEI), 522–556 (TRKS…LPPS), 570–756 (EPLH…TSKP), 781–813 (EPDS…EDRK), 848–867 (TKQN…SQSN), and 877–944 (HAPA…LPSW). 2 stretches are compositionally biased toward polar residues: residues 189–199 (TSPSPSETADS) and 268–287 (PSTT…SSSP). Positions 309–320 (SLTSSTRLSTSY) are enriched in low complexity. Polar residues-rich tracts occupy residues 329–339 (VAFSSETVTSS) and 522–554 (TRKS…SSLP). Composition is skewed to basic and acidic residues over residues 570–580 (EPLHDDSRQNS) and 624–644 (RSSE…RELS). Positions 645 to 664 (NNEFPSRQTKTVTSANSSNI) are enriched in polar residues. Basic and acidic residues-rich tracts occupy residues 665–679 (RDME…RSEP) and 692–702 (KPFEEKSEKPT). Composition is skewed to polar residues over residues 705–719 (RLVT…SWHS) and 784–808 (SVTS…TNSQ). A compositionally biased stretch (low complexity) spans 890–902 (PSSKSPLLKTPKS).

It belongs to the INCENP family. As to quaternary structure, component of the CPC complex at least composed of ark1, bir1 and pic1.

It is found in the nucleus. Its subcellular location is the cytoplasm. It localises to the cytoskeleton. The protein localises to the spindle. Component of the chromosomal passenger complex (CPC), a complex that acts as a key regulator of mitosis. Has a role in sister chromatid cohesion and condensation. The protein is Inner centromere protein pic1 (pic1) of Schizosaccharomyces pombe (strain 972 / ATCC 24843) (Fission yeast).